The chain runs to 82 residues: Small ribosomal subunit protein bS18 (82 aa).

It belongs to the bacterial ribosomal protein bS18 family. As to quaternary structure, part of the 30S ribosomal subunit. Forms a tight heterodimer with protein bS6.

Its function is as follows. Binds as a heterodimer with protein bS6 to the central domain of the 16S rRNA, where it helps stabilize the platform of the 30S subunit. The sequence is that of Small ribosomal subunit protein bS18 from Chlamydia caviae (strain ATCC VR-813 / DSM 19441 / 03DC25 / GPIC) (Chlamydophila caviae).